The chain runs to 407 residues: MAAPGARRPLLLLLLAGLAHSAPALFEVKDNNGTACIMASFSASFLTTYDAGHVSKVSNMTLPASAEVLKNSSSCGEKNASEPTLAITFGEGYLLKLTFTKNTTRYSVQHMYFTYNLSDTQFFPNASSKGPDTVDSTTDIKADINKTYRCVSDIRVYMKNVTIVLWDATIQAYLPSSNFSKEETRCPQDQPSPTTGPPSPSPPLVPTNPSVSKYNVTGDNGTCLLASMALQLNITYMKKDNTTVTRAFNINPSDKYSGTCGAQLVTLKVGNKSRVLELQFGMNATSSLFFLQGVQLNMTLPDAIEPTFSTSNYSLKALQASVGNSYKCNSEEHIFVSKALALNVFSVQVQAFRVESDRFGSVEECVQDGNNMLIPIAVGGALAGLVLIVLIAYLIGRKRSHAGYQTI.

Residues 1–21 form the signal peptide; sequence MAAPGARRPLLLLLLAGLAHS. The first lumenal domain stretch occupies residues 22–189; it reads APALFEVKDN…SKEETRCPQD (168 aa). Residues 22–371 are Lumenal-facing; sequence APALFEVKDN…VEECVQDGNN (350 aa). Residues N32, N59, N71, N79, N102, N116, N125, N145, N160, and N178 are each glycosylated (N-linked (GlcNAc...) asparagine). A disulfide bridge links C36 with C75. Cysteines 150 and 186 form a disulfide. Residues 180–211 are disordered; it reads SKEETRCPQDQPSPTTGPPSPSPPLVPTNPSV. Positions 190 to 219 are hinge; that stretch reads QPSPTTGPPSPSPPLVPTNPSVSKYNVTGD. The segment covering 194–206 has biased composition (pro residues); sequence TTGPPSPSPPLVP. N-linked (GlcNAc...) asparagine glycans are attached at residues N215, N220, N233, N241, N271, N283, N297, and N312. The interval 220-371 is second lumenal domain; it reads NGTCLLASMA…VEECVQDGNN (152 aa). An intrachain disulfide couples C223 to C260. A disulfide bridge connects residues C328 and C365. Residues 372–395 form a helical membrane-spanning segment; sequence MLIPIAVGGALAGLVLIVLIAYLI. The Cytoplasmic portion of the chain corresponds to 396–407; the sequence is GRKRSHAGYQTI.

The protein belongs to the LAMP family. In terms of assembly, interacts with ABCB9; this interaction strongly stabilizes ABCB9 and protects ABCB9 against lysosomal degradation. Interacts with FURIN. Interacts with TMEM175; inhibiting the proton channel activity of TMEM175. In terms of processing, O- and N-glycosylated; some of the N-glycans attached to LAMP-1 are polylactosaminoglycans.

It localises to the lysosome membrane. Its subcellular location is the endosome membrane. It is found in the late endosome membrane. The protein resides in the cell membrane. The protein localises to the cytolytic granule membrane. Lysosomal membrane glycoprotein which plays an important role in lysosome biogenesis, lysosomal pH regulation, autophagy and cholesterol homeostasis. Acts as an important regulator of lysosomal lumen pH regulation by acting as a direct inhibitor of the proton channel TMEM175, facilitating lysosomal acidification for optimal hydrolase activity. Also plays an important role in NK-cells cytotoxicity. Mechanistically, participates in cytotoxic granule movement to the cell surface and perforin trafficking to the lytic granule. In addition, protects NK-cells from degranulation-associated damage induced by their own cytotoxic granule content. Presents carbohydrate ligands to selectins. The chain is Lysosome-associated membrane glycoprotein 1 (Lamp1) from Rattus norvegicus (Rat).